The primary structure comprises 160 residues: UPF0260 protein GDI1595/Gdia_1801 (160 aa).

This sequence belongs to the UPF0260 family.

The polypeptide is UPF0260 protein GDI1595/Gdia_1801 (Gluconacetobacter diazotrophicus (strain ATCC 49037 / DSM 5601 / CCUG 37298 / CIP 103539 / LMG 7603 / PAl5)).